Here is a 261-residue protein sequence, read N- to C-terminus: Carnitinyl-CoA dehydratase (261 aa).

Glu-111 functions as the Nucleophile in the catalytic mechanism. Glu-131 acts as the Proton acceptor in catalysis.

It belongs to the enoyl-CoA hydratase/isomerase family.

It catalyses the reaction (R)-carnitinyl-CoA = crotonobetainyl-CoA + H2O. It participates in amine and polyamine metabolism; carnitine metabolism. Its function is as follows. Catalyzes the reversible dehydration of L-carnitinyl-CoA to crotonobetainyl-CoA. This is Carnitinyl-CoA dehydratase from Shigella flexneri.